A 579-amino-acid polypeptide reads, in one-letter code: CTP synthase (579 aa).

Positions Met1–Leu281 are amidoligase domain. Ser23 provides a ligand contact to CTP. Residue Ser23 participates in UTP binding. Residues Ser24–Leu29 and Asp81 each bind ATP. Positions 81 and 155 each coordinate Mg(2+). CTP-binding positions include Asp162–Glu164, Lys202–Gln207, and Lys238. UTP is bound by residues Lys202–Gln207 and Lys238. The region spanning Arg306–Ala554 is the Glutamine amidotransferase type-1 domain. Gly369 contributes to the L-glutamine binding site. The Nucleophile; for glutamine hydrolysis role is filled by Cys396. Residues Leu397–Gln400, Glu419, and Arg480 each bind L-glutamine. Active-site residues include His527 and Glu529.

It belongs to the CTP synthase family. Homotetramer.

The catalysed reaction is UTP + L-glutamine + ATP + H2O = CTP + L-glutamate + ADP + phosphate + 2 H(+). The enzyme catalyses L-glutamine + H2O = L-glutamate + NH4(+). It carries out the reaction UTP + NH4(+) + ATP = CTP + ADP + phosphate + 2 H(+). The protein operates within pyrimidine metabolism; CTP biosynthesis via de novo pathway; CTP from UDP: step 2/2. Allosterically activated by GTP, when glutamine is the substrate; GTP has no effect on the reaction when ammonia is the substrate. The allosteric effector GTP functions by stabilizing the protein conformation that binds the tetrahedral intermediate(s) formed during glutamine hydrolysis. Inhibited by the product CTP, via allosteric rather than competitive inhibition. Its function is as follows. Catalyzes the ATP-dependent amination of UTP to CTP with either L-glutamine or ammonia as the source of nitrogen. Regulates intracellular CTP levels through interactions with the four ribonucleotide triphosphates. In Mycobacterium sp. (strain KMS), this protein is CTP synthase.